Reading from the N-terminus, the 438-residue chain is Trigger factor (438 aa).

A PPIase FKBP-type domain is found at 160 to 245 (DDKVTIDFVG…VKKIQQAELP (86 aa)).

It belongs to the FKBP-type PPIase family. Tig subfamily.

The protein resides in the cytoplasm. It catalyses the reaction [protein]-peptidylproline (omega=180) = [protein]-peptidylproline (omega=0). In terms of biological role, involved in protein export. Acts as a chaperone by maintaining the newly synthesized protein in an open conformation. Functions as a peptidyl-prolyl cis-trans isomerase. This chain is Trigger factor, found in Francisella tularensis subsp. holarctica (strain LVS).